Here is a 106-residue protein sequence, read N- to C-terminus: ATP synthase-coupling factor 6, mitochondrial (106 aa).

It belongs to the eukaryotic ATPase subunit F6 family. In terms of assembly, F-type ATPases have 2 components, CF(1) - the catalytic core - and CF(0) - the membrane proton channel. CF(0) seems to have nine subunits: a, b, c, d, e, f, g, F6 and 8 (or A6L).

The protein resides in the mitochondrion. It is found in the mitochondrion inner membrane. In terms of biological role, mitochondrial membrane ATP synthase (F(1)F(0) ATP synthase or Complex V) produces ATP from ADP in the presence of a proton gradient across the membrane which is generated by electron transport complexes of the respiratory chain. F-type ATPases consist of two structural domains, F(1) - containing the extramembraneous catalytic core and F(0) - containing the membrane proton channel, linked together by a central stalk and a peripheral stalk. During catalysis, ATP synthesis in the catalytic domain of F(1) is coupled via a rotary mechanism of the central stalk subunits to proton translocation. Part of the complex F(0) domain and the peripheric stalk, which acts as a stator to hold the catalytic alpha(3)beta(3) subcomplex and subunit a/ATP6 static relative to the rotary elements. The polypeptide is ATP synthase-coupling factor 6, mitochondrial (Drosophila melanogaster (Fruit fly)).